Here is a 544-residue protein sequence, read N- to C-terminus: uncharacterized protein (544 aa).

This is an uncharacterized protein from Acanthamoeba polyphaga mimivirus (APMV).